The chain runs to 253 residues: Negative modulator of initiation of replication (253 aa).

Residues 66-112 are disordered; it reads SNQEQQTGHGHAGEPSAVQTPESNDYAKAQPHSSGYQPGQLEGHKSE. Residues 154–155 are interaction with DNA; sequence AV.

This sequence belongs to the SeqA family. As to quaternary structure, homodimer. Polymerizes to form helical filaments.

It is found in the cytoplasm. Functionally, negative regulator of replication initiation, which contributes to regulation of DNA replication and ensures that replication initiation occurs exactly once per chromosome per cell cycle. Binds to pairs of hemimethylated GATC sequences in the oriC region, thus preventing assembly of replication proteins and re-initiation at newly replicated origins. Repression is relieved when the region becomes fully methylated. The sequence is that of Negative modulator of initiation of replication from Shewanella denitrificans (strain OS217 / ATCC BAA-1090 / DSM 15013).